Reading from the N-terminus, the 280-residue chain is Tryptophan synthase alpha chain (280 aa).

Catalysis depends on proton acceptor residues Glu49 and Asp60.

The protein belongs to the TrpA family. Tetramer of two alpha and two beta chains.

The enzyme catalyses (1S,2R)-1-C-(indol-3-yl)glycerol 3-phosphate + L-serine = D-glyceraldehyde 3-phosphate + L-tryptophan + H2O. The protein operates within amino-acid biosynthesis; L-tryptophan biosynthesis; L-tryptophan from chorismate: step 5/5. Functionally, the alpha subunit is responsible for the aldol cleavage of indoleglycerol phosphate to indole and glyceraldehyde 3-phosphate. This Corynebacterium efficiens (strain DSM 44549 / YS-314 / AJ 12310 / JCM 11189 / NBRC 100395) protein is Tryptophan synthase alpha chain.